A 498-amino-acid polypeptide reads, in one-letter code: ATP synthase subunit beta, chloroplastic (498 aa).

Residue 172 to 179 participates in ATP binding; that stretch reads GGAGVGKT.

It belongs to the ATPase alpha/beta chains family. In terms of assembly, F-type ATPases have 2 components, CF(1) - the catalytic core - and CF(0) - the membrane proton channel. CF(1) has five subunits: alpha(3), beta(3), gamma(1), delta(1), epsilon(1). CF(0) has four main subunits: a(1), b(1), b'(1) and c(9-12).

The protein resides in the plastid. It is found in the chloroplast thylakoid membrane. The catalysed reaction is ATP + H2O + 4 H(+)(in) = ADP + phosphate + 5 H(+)(out). In terms of biological role, produces ATP from ADP in the presence of a proton gradient across the membrane. The catalytic sites are hosted primarily by the beta subunits. This Agrostis stolonifera (Creeping bentgrass) protein is ATP synthase subunit beta, chloroplastic.